An 828-amino-acid polypeptide reads, in one-letter code: Leucine--tRNA ligase (828 aa).

Positions 42–52 match the 'HIGH' region motif; that stretch reads PYPSGTLHVGH. The 'KMSKS' region signature appears at 582 to 586; it reads KMSKS. Position 585 (K585) interacts with ATP.

This sequence belongs to the class-I aminoacyl-tRNA synthetase family.

It is found in the cytoplasm. The enzyme catalyses tRNA(Leu) + L-leucine + ATP = L-leucyl-tRNA(Leu) + AMP + diphosphate. The protein is Leucine--tRNA ligase of Petrotoga mobilis (strain DSM 10674 / SJ95).